The chain runs to 24 residues: MATGGFGCLLLLIREIDLSVKRQI.

Belongs to the humanin family. As to expression, expressed in testis.

Its subcellular location is the secreted. It localises to the cytoplasm. Functionally, plays a role as a neuroprotective and antiapoptotic factor. This Homo sapiens (Human) protein is Humanin-like 7.